A 110-amino-acid chain; its full sequence is Hydrogenase maturation factor HypA (110 aa).

H2 provides a ligand contact to Ni(2+). Residues C73, C76, C87, and C89 each contribute to the Zn(2+) site.

Belongs to the HypA/HybF family.

Functionally, involved in the maturation of [NiFe] hydrogenases. Required for nickel insertion into the metal center of the hydrogenase. The protein is Hydrogenase maturation factor HypA of Archaeoglobus fulgidus (strain ATCC 49558 / DSM 4304 / JCM 9628 / NBRC 100126 / VC-16).